Reading from the N-terminus, the 331-residue chain is L-lactate dehydrogenase A chain (331 aa).

NAD(+) is bound by residues 29–57 and Arg98; that span reads GMVG…MEDK. Substrate is bound by residues Arg105, Asn137, and Arg168. Asn137 contacts NAD(+). Residue His192 is the Proton acceptor of the active site. Substrate is bound at residue Thr247.

Belongs to the LDH/MDH superfamily. LDH family. In terms of assembly, homotetramer.

It localises to the cytoplasm. It carries out the reaction (S)-lactate + NAD(+) = pyruvate + NADH + H(+). It functions in the pathway fermentation; pyruvate fermentation to lactate; (S)-lactate from pyruvate: step 1/1. Interconverts simultaneously and stereospecifically pyruvate and lactate with concomitant interconversion of NADH and NAD(+). The protein is L-lactate dehydrogenase A chain (ldha) of Patagonotothen tessellata (Black southern cod).